A 608-amino-acid chain; its full sequence is Cilia- and flagella-associated protein 100 (608 aa).

Positions methionine 1–lysine 17 are enriched in polar residues. Residues methionine 1–serine 57 are disordered. Positions leucine 20 to glutamate 32 are enriched in low complexity. 2 coiled-coil regions span residues threonine 164–aspartate 196 and leucine 230–lysine 257. 2 disordered regions span residues alanine 291–glycine 320 and leucine 339–proline 377. Residues leucine 339–serine 361 show a composition bias toward low complexity. Coiled-coil stretches lie at residues glutamine 385–glutamine 435 and threonine 500–threonine 575.

The protein belongs to the CFAP100 family.

The protein resides in the cytoplasm. Its subcellular location is the cytoskeleton. It is found in the cilium axoneme. Its function is as follows. May play a role in ciliary/flagellar motility by regulating the assembly and the activity of axonemal inner dynein arm. The polypeptide is Cilia- and flagella-associated protein 100 (Macaca fascicularis (Crab-eating macaque)).